The following is a 449-amino-acid chain: Guanine/hypoxanthine permease GhxP (449 aa).

At 1 to 25 the chain is on the cytoplasmic side; it reads MSTPSARTGGSLDAWFKISQRGSTV. Residues 26 to 49 form a helical membrane-spanning segment; it reads RQEVVAGLTTFLAMVYSVIVVPGM. Residues 50-59 are Periplasmic-facing; the sequence is LGKAGFPPAA. Residues 60–78 traverse the membrane as a helical segment; it reads VFVATCLVAGLGSIVMGLW. Residues 79 to 80 lie on the Cytoplasmic side of the membrane; it reads AN. A discontinuously helical membrane pass occupies residues 81 to 97; the sequence is LPLAIGCAISLTAFTAF. Over 98–109 the chain is Periplasmic; sequence SLVLGQHISVPV. A helical transmembrane segment spans residues 110-129; it reads ALGAVFLMGVLFTVISATGI. Residues 130–141 lie on the Cytoplasmic side of the membrane; it reads RSWILRNLPHGV. A helical transmembrane segment spans residues 142-162; sequence AHGTGIGIGLFLLLIAANGVG. The Periplasmic segment spans residues 163-180; it reads LVIKNPLDGLPVALGDFA. The chain crosses the membrane as a helical span at residues 181–198; it reads TFPVIMSLVGLAVIIGLE. Topologically, residues 199–202 are cytoplasmic; sequence KLKV. The helical transmembrane segment at 203-222 threads the bilayer; that stretch reads PGGILLTIIGISIVGLIFDP. The Periplasmic segment spans residues 223–254; sequence NVHFSGVFAMPSLSDENGNSLIGSLDIMGALN. Residues 255–283 form a helical membrane-spanning segment; it reads PVVLPSVLALVMTAVFDATGTIRAVAGQA. The Cytoplasmic segment spans residues 284 to 296; that stretch reads NLLDKDGQIIDGG. Residues 297 to 312 form a helical membrane-spanning segment; the sequence is KALTTDSMSSVFSGLV. Over 313-314 the chain is Periplasmic; it reads GA. The discontinuously helical transmembrane segment at 315 to 330 threads the bilayer; the sequence is APAAVYIESAAGTAAG. At 331–334 the chain is on the cytoplasmic side; the sequence is GKTG. The helical transmembrane segment at 335 to 349 threads the bilayer; the sequence is LTAITVGVLFLLILF. The Periplasmic portion of the chain corresponds to 350-360; the sequence is LSPLSYLVPGY. The chain crosses the membrane as a helical span at residues 361 to 380; that stretch reads ATAPALMYVGLLMLSNVAKI. The Cytoplasmic segment spans residues 381-385; it reads DFADF. The discontinuously helical intramembrane region spans 386-421; the sequence is VDAMAGLVTAVFIVLTCNIVTGIMIGFATLVIGRLV. Over 422-449 the chain is Cytoplasmic; that stretch reads SGEWRKLNIGTVVIAVALVTFYAGGWAI.

Belongs to the nucleobase:cation symporter-2 (NCS2) (TC 2.A.40) family. Azg-like subfamily.

It localises to the cell inner membrane. Functionally, high-affinity transporter for guanine and hypoxanthine. This Escherichia coli O157:H7 protein is Guanine/hypoxanthine permease GhxP (ghxP).